We begin with the raw amino-acid sequence, 301 residues long: Pyridoxal 5'-phosphate synthase subunit PdxS (301 aa).

A D-ribose 5-phosphate-binding site is contributed by D31. The Schiff-base intermediate with D-ribose 5-phosphate role is filled by K88. G160 contributes to the D-ribose 5-phosphate binding site. K172 contacts D-glyceraldehyde 3-phosphate. Residues G221 and 242–243 each bind D-ribose 5-phosphate; that span reads GS.

It belongs to the PdxS/SNZ family. As to quaternary structure, in the presence of PdxT, forms a dodecamer of heterodimers.

It carries out the reaction aldehydo-D-ribose 5-phosphate + D-glyceraldehyde 3-phosphate + L-glutamine = pyridoxal 5'-phosphate + L-glutamate + phosphate + 3 H2O + H(+). It functions in the pathway cofactor biosynthesis; pyridoxal 5'-phosphate biosynthesis. Its function is as follows. Catalyzes the formation of pyridoxal 5'-phosphate from ribose 5-phosphate (RBP), glyceraldehyde 3-phosphate (G3P) and ammonia. The ammonia is provided by the PdxT subunit. Can also use ribulose 5-phosphate and dihydroxyacetone phosphate as substrates, resulting from enzyme-catalyzed isomerization of RBP and G3P, respectively. The polypeptide is Pyridoxal 5'-phosphate synthase subunit PdxS (Methanosarcina mazei (strain ATCC BAA-159 / DSM 3647 / Goe1 / Go1 / JCM 11833 / OCM 88) (Methanosarcina frisia)).